The sequence spans 573 residues: Developmental and secondary metabolism regulator VEL1 (573 aa).

The Velvet domain occupies 26–220 (NRHLWYQLTV…ADQGCRVRIR (195 aa)). Residues 40 to 45 (ERARAC) carry the Nuclear localization signal motif. Residues 222–520 (DVRMRKRDGK…STGGKRKHDH (299 aa)) are disordered. Residues 230 to 245 (GKGSGFDRRGEEEYSR) show a composition bias toward basic and acidic residues. 2 stretches are compositionally biased toward pro residues: residues 291–310 (APPPLPPPPPSSYDAPPPAA) and 341–351 (APIPPATPTGP). Residues 352-363 (YPTSSAAPSPYA) show a composition bias toward low complexity. A compositionally biased stretch (pro residues) spans 379–389 (PPAPSASPAPP). Polar residues predominate over residues 432 to 448 (TPASQPTYSTPASQPTY). Residues 458–475 (SAPPPAPYSAPAPPPPRP) show a composition bias toward pro residues. The tract at residues 476 to 504 (SMSQSSLAPLKIASLVSPLPPIEAQTEPL) is PEST.

The protein belongs to the velvet family. VeA subfamily. Component of the heterotrimeric velvet complex composed of LAE1, VEL1 and VEL2; VEL1 acting as a bridging protein between LAE1 and VEL2. Interacts with LAE1.

It localises to the nucleus. The protein localises to the cytoplasm. Component of the velvet transcription factor complex that controls sexual/asexual developmental ratio in response to light, promoting sexual development in the darkness while stimulating asexual sporulation under illumination. The velvet complex hat acts as a global regulator for secondary metabolite gene expression. Regulates expression of the carbohydrate-active enzyme gene clusters. In Hypocrea jecorina (strain QM6a) (Trichoderma reesei), this protein is Developmental and secondary metabolism regulator VEL1.